The primary structure comprises 403 residues: S-adenosylmethionine:tRNA ribosyltransferase-isomerase (403 aa).

Belongs to the QueA family. In terms of assembly, monomer.

It localises to the cytoplasm. The catalysed reaction is 7-aminomethyl-7-carbaguanosine(34) in tRNA + S-adenosyl-L-methionine = epoxyqueuosine(34) in tRNA + adenine + L-methionine + 2 H(+). Its pathway is tRNA modification; tRNA-queuosine biosynthesis. Transfers and isomerizes the ribose moiety from AdoMet to the 7-aminomethyl group of 7-deazaguanine (preQ1-tRNA) to give epoxyqueuosine (oQ-tRNA). In Psychrobacter arcticus (strain DSM 17307 / VKM B-2377 / 273-4), this protein is S-adenosylmethionine:tRNA ribosyltransferase-isomerase.